A 357-amino-acid polypeptide reads, in one-letter code: UDP-xylose transporter 3 (357 aa).

10 helical membrane passes run 7 to 27 (FQLG…SIVI), 31 to 51 (ALIS…HLLV), 75 to 95 (VMGF…SLGF), 100 to 120 (FYQM…TLFF), 132 to 152 (LTIL…LNML), 154 to 174 (SVLS…TNTI), 194 to 214 (AITL…QNVF), 224 to 244 (FFIV…FLVI), 250 to 270 (VTYQ…GYVL), and 280 to 300 (ILGI…CSIE). Ser-334 bears the Phosphoserine mark.

This sequence belongs to the TPT transporter family. TPT (TC 2.A.7.9) subfamily. In terms of tissue distribution, ubiquitous.

The protein resides in the golgi apparatus membrane. In terms of biological role, nucleotide-sugar transporter that transports UDP-xylose and UMP in a strict counter-exchange mode. The sequence is that of UDP-xylose transporter 3 from Arabidopsis thaliana (Mouse-ear cress).